Here is a 345-residue protein sequence, read N- to C-terminus: Pectin lyase (345 aa).

The N-terminal stretch at 1–24 (MKRFCLWFAVFSLLLVLLPGKAFG) is a signal peptide. The active site involves Arg-234.

It belongs to the polysaccharide lyase 1 family.

It is found in the secreted. The enzyme catalyses Eliminative cleavage of (1-&gt;4)-alpha-D-galacturonan methyl ester to give oligosaccharides with 4-deoxy-6-O-methyl-alpha-D-galact-4-enuronosyl groups at their non-reducing ends.. Its activity is regulated as follows. Inhibited by Hg(2+) and Mn(2+). Not affected by EDTA in vitro. Catalyzes the depolymerization of pectins of methyl esterification degree from 13 to 75%, with an endo mode of action. Cannot degrade polygalacturonate. Also displays protopectinase activity, i.e. releases pectin from protopectin. The polypeptide is Pectin lyase (pelB) (Bacillus subtilis).